The chain runs to 230 residues: Cyclin-dependent kinase inhibitor rum1 (230 aa).

Disordered regions lie at residues 1–25 (MEPS…SFKG), 43–118 (PESD…DGLY), and 188–230 (SRVP…NLLR). A Phosphothreonine; by MAPK modification is found at threonine 13. At serine 19 the chain carries Phosphoserine; by MAPK. Phosphothreonine; by cdc2 occurs at positions 58 and 62. Residues 67-147 (LLPNLMLQDR…TFKPKLLFAD (81 aa)) are CDK inhibitory and cyclin-binding. Residues 78–91 (NSLERCMEEDREHN) show a composition bias toward basic and acidic residues. Residues 93–102 (FLSSSDNQLL) show a composition bias toward polar residues. Positions 101–230 (LLSRKKRKPT…KDENRHNLLR (130 aa)) are required for activity as a cdc2 kinase inhibitor. The span at 188 to 199 (SRVPSSSSGSFV) shows a compositional bias: low complexity. The span at 219–230 (NTKDENRHNLLR) shows a compositional bias: basic and acidic residues.

As to quaternary structure, interacts with cdc13, cig2 and pop1. Phosphorylated by cig1-associated cdc2 which leads to increased stability. Phosphorylation by MAPK reduces cdc2 kinase inhibitor ability.

The protein resides in the nucleus. Functionally, regulator of cell cycle G1 phase progression. Ensures the correct sequence of S phase and mitosis in the cell by acting as an inhibitor of the cdc2 mitotic kinase. Probably interacts with cdc2 to inhibit its action until the cell mass for Start is reached. Determines the length of the pre-Start G1 period and prevents mitosis from happening in early G1 cells. Required for maintaining pheromone-induced G1 arrest. Acts as an adapter protein since interaction with cdc13 promotes cyclin proteolysis during G1. Becomes a target for degradation at the G1/S phase transition, following phosphorylation by cig1-associated cdc2 at the G1/S phase transition. The sequence is that of Cyclin-dependent kinase inhibitor rum1 (rum1) from Schizosaccharomyces pombe (strain 972 / ATCC 24843) (Fission yeast).